The following is a 568-amino-acid chain: 2-succinyl-5-enolpyruvyl-6-hydroxy-3-cyclohexene-1-carboxylate synthase (568 aa).

The protein belongs to the TPP enzyme family. MenD subfamily. As to quaternary structure, homodimer. It depends on Mg(2+) as a cofactor. Requires Mn(2+) as cofactor. Thiamine diphosphate is required as a cofactor.

It carries out the reaction isochorismate + 2-oxoglutarate + H(+) = 5-enolpyruvoyl-6-hydroxy-2-succinyl-cyclohex-3-ene-1-carboxylate + CO2. It functions in the pathway quinol/quinone metabolism; 1,4-dihydroxy-2-naphthoate biosynthesis; 1,4-dihydroxy-2-naphthoate from chorismate: step 2/7. Its pathway is quinol/quinone metabolism; menaquinone biosynthesis. Catalyzes the thiamine diphosphate-dependent decarboxylation of 2-oxoglutarate and the subsequent addition of the resulting succinic semialdehyde-thiamine pyrophosphate anion to isochorismate to yield 2-succinyl-5-enolpyruvyl-6-hydroxy-3-cyclohexene-1-carboxylate (SEPHCHC). This chain is 2-succinyl-5-enolpyruvyl-6-hydroxy-3-cyclohexene-1-carboxylate synthase, found in Actinobacillus pleuropneumoniae serotype 7 (strain AP76).